A 280-amino-acid chain; its full sequence is Urease accessory protein UreD 1 (280 aa).

This sequence belongs to the UreD family. UreD, UreF and UreG form a complex that acts as a GTP-hydrolysis-dependent molecular chaperone, activating the urease apoprotein by helping to assemble the nickel containing metallocenter of UreC. The UreE protein probably delivers the nickel.

It localises to the cytoplasm. In terms of biological role, required for maturation of urease via the functional incorporation of the urease nickel metallocenter. The protein is Urease accessory protein UreD 1 of Brucella melitensis biotype 1 (strain ATCC 23456 / CCUG 17765 / NCTC 10094 / 16M).